Reading from the N-terminus, the 168-residue chain is G/U mismatch-specific DNA glycosylase (168 aa).

Belongs to the uracil-DNA glycosylase (UDG) superfamily. TDG/mug family. Binds DNA as a monomer.

The protein localises to the cytoplasm. The catalysed reaction is Specifically hydrolyzes mismatched double-stranded DNA and polynucleotides, releasing free uracil.. Its function is as follows. Excises ethenocytosine and uracil, which can arise by alkylation or deamination of cytosine, respectively, from the corresponding mispairs with guanine in ds-DNA. It is capable of hydrolyzing the carbon-nitrogen bond between the sugar-phosphate backbone of the DNA and the mispaired base. The complementary strand guanine functions in substrate recognition. Required for DNA damage lesion repair in stationary-phase cells. This chain is G/U mismatch-specific DNA glycosylase, found in Escherichia coli O157:H7 (strain EC4115 / EHEC).